Consider the following 51-residue polypeptide: Large ribosomal subunit protein bL33 (51 aa).

It belongs to the bacterial ribosomal protein bL33 family.

This Alkalilimnicola ehrlichii (strain ATCC BAA-1101 / DSM 17681 / MLHE-1) protein is Large ribosomal subunit protein bL33.